The primary structure comprises 141 residues: Hemoglobin subunit alpha-3 (141 aa).

Residues 1 to 141 (VLSPADKTNV…VSTVLTSKYR (141 aa)) enclose the Globin domain. Histidine 58 contacts O2. Heme b is bound at residue histidine 87.

The protein belongs to the globin family. Heterotetramer of two alpha chains and two beta chains. In terms of tissue distribution, red blood cells.

Involved in oxygen transport from the lung to the various peripheral tissues. The protein is Hemoglobin subunit alpha-3 of Pan troglodytes (Chimpanzee).